We begin with the raw amino-acid sequence, 347 residues long: N-acetyl-gamma-glutamyl-phosphate reductase (347 aa).

C151 is a catalytic residue.

This sequence belongs to the NAGSA dehydrogenase family. Type 1 subfamily.

The protein localises to the cytoplasm. It catalyses the reaction N-acetyl-L-glutamate 5-semialdehyde + phosphate + NADP(+) = N-acetyl-L-glutamyl 5-phosphate + NADPH + H(+). It functions in the pathway amino-acid biosynthesis; L-arginine biosynthesis; N(2)-acetyl-L-ornithine from L-glutamate: step 3/4. Its function is as follows. Catalyzes the NADPH-dependent reduction of N-acetyl-5-glutamyl phosphate to yield N-acetyl-L-glutamate 5-semialdehyde. The chain is N-acetyl-gamma-glutamyl-phosphate reductase from Corynebacterium glutamicum (strain R).